The following is a 394-amino-acid chain: Elongation factor Tu 2 (394 aa).

The tr-type G domain maps to 10-204; the sequence is KPHVNVGTIG…ALDTYIPEPE (195 aa). The segment at 19–26 is G1; it reads GHVDHGKT. 19 to 26 lines the GTP pocket; that stretch reads GHVDHGKT. T26 is a Mg(2+) binding site. A G2 region spans residues 60–64; the sequence is GITIS. Residues 81–84 form a G3 region; sequence DCPG. GTP contacts are provided by residues 81 to 85 and 136 to 139; these read DCPGH and NKCD. The tract at residues 136–139 is G4; sequence NKCD. The tract at residues 174-176 is G5; it reads SAL.

It belongs to the TRAFAC class translation factor GTPase superfamily. Classic translation factor GTPase family. EF-Tu/EF-1A subfamily. In terms of assembly, monomer.

The protein localises to the cytoplasm. The catalysed reaction is GTP + H2O = GDP + phosphate + H(+). GTP hydrolase that promotes the GTP-dependent binding of aminoacyl-tRNA to the A-site of ribosomes during protein biosynthesis. This chain is Elongation factor Tu 2, found in Vibrio vulnificus (strain CMCP6).